The primary structure comprises 654 residues: Pentatricopeptide repeat-containing protein At3g16610 (654 aa).

PPR repeat units follow at residues 1 to 32 (MFLSLLETCIRSRNLVLGQVIHQHLLKRSLTL), 34 to 64 (SSTVLVNLTRLYASCNEVELARHVFDEIPHP), 67 to 101 (NPIAWDLMIRAYASNDFAEKALDLYYKMLNSGVRP), 102 to 136 (TKYTYPFVLKACAGLRAIDDGKLIHSHVNCSDFAT), 137 to 171 (DMYVCTALVDFYAKCGELEMAIKVFDEMPKRDMVA), 172 to 203 (WNAMISGFSLHCCLTDVIGLFLDMRRIDGLSP), 204 to 238 (NLSTIVGMFPALGRAGALREGKAVHGYCTRMGFSN), 239 to 269 (DLVVKTGILDVYAKSKCIIYARRVFDLDFKK), 270 to 304 (NEVTWSAMIGGYVENEMIKEAGEVFFQMLVNDNVA), 307 to 341 (TPVAIGLILMGCARFGDLSGGRCVHCYAVKAGFIL), 342 to 372 (DLTVQNTIISFYAKYGSLCDAFRQFSEIGLK), 373 to 407 (DVISYNSLITGCVVNCRPEESFRLFHEMRTSGIRP), 408 to 442 (DITTLLGVLTACSHLAALGHGSSCHGYCVVHGYAV), 443 to 473 (NTSICNALMDMYTKCGKLDVAKRVFDTMHKR), 474 to 508 (DIVSWNTMLFGFGIHGLGKEALSLFNSMQETGVNP), 509 to 543 (DEVTLLAILSACSHSGLVDEGKQLFNSMSRGDFNV), and 546 to 576 (RIDHYNCMTDLLARAGYLDEAYDFVNKMPFE). The interval 581–654 (VLGTLLSACW…KTPGYSWVDV (74 aa)) is type E motif; degenerate.

It belongs to the PPR family. PCMP-E subfamily.

In Arabidopsis thaliana (Mouse-ear cress), this protein is Pentatricopeptide repeat-containing protein At3g16610 (PCMP-E91).